A 144-amino-acid chain; its full sequence is Large ribosomal subunit protein uL15 (144 aa).

Positions 1–54 are disordered; sequence MRLNTLSPAAGSKHAPKRVGRGMGSGLGKTAGRGHKGQKSRSGGGVRPGFEGGQ. Composition is skewed to gly residues over residues 21 to 31 and 42 to 52; these read RGMGSGLGKTA and SGGGVRPGFEG.

The protein belongs to the universal ribosomal protein uL15 family. In terms of assembly, part of the 50S ribosomal subunit.

Its function is as follows. Binds to the 23S rRNA. This Shewanella baltica (strain OS223) protein is Large ribosomal subunit protein uL15.